We begin with the raw amino-acid sequence, 101 residues long: Small ribosomal subunit protein uS10 (101 aa).

It belongs to the universal ribosomal protein uS10 family. Part of the 30S ribosomal subunit.

In terms of biological role, involved in the binding of tRNA to the ribosomes. The polypeptide is Small ribosomal subunit protein uS10 (Mycobacteroides abscessus (strain ATCC 19977 / DSM 44196 / CCUG 20993 / CIP 104536 / JCM 13569 / NCTC 13031 / TMC 1543 / L948) (Mycobacterium abscessus)).